The chain runs to 237 residues: Uridylate kinase (237 aa).

Residue 9–12 (KLSG) coordinates ATP. Residues 17 to 22 (GTQGYG) are involved in allosteric activation by GTP. Gly-51 lines the UMP pocket. Positions 52 and 56 each coordinate ATP. UMP contacts are provided by residues Asp-71 and 132-139 (CGNPFFTT). Residues Thr-159, Tyr-165, and Asp-168 each contribute to the ATP site.

Belongs to the UMP kinase family. As to quaternary structure, homohexamer.

Its subcellular location is the cytoplasm. The catalysed reaction is UMP + ATP = UDP + ADP. Its pathway is pyrimidine metabolism; CTP biosynthesis via de novo pathway; UDP from UMP (UMPK route): step 1/1. With respect to regulation, allosterically activated by GTP. Inhibited by UTP. Its function is as follows. Catalyzes the reversible phosphorylation of UMP to UDP. This is Uridylate kinase from Parasynechococcus marenigrum (strain WH8102).